The chain runs to 416 residues: 3-oxoacyl-[acyl-carrier-protein] synthase 2 (416 aa).

Residues lysine 6–lysine 414 enclose the Ketosynthase family 3 (KS3) domain. Residues cysteine 167, histidine 307, and histidine 344 each act as for beta-ketoacyl synthase activity in the active site.

The protein belongs to the thiolase-like superfamily. Beta-ketoacyl-ACP synthases family. As to quaternary structure, homodimer.

The catalysed reaction is a fatty acyl-[ACP] + malonyl-[ACP] + H(+) = a 3-oxoacyl-[ACP] + holo-[ACP] + CO2. It catalyses the reaction (9Z)-hexadecenoyl-[ACP] + malonyl-[ACP] + H(+) = 3-oxo-(11Z)-octadecenoyl-[ACP] + holo-[ACP] + CO2. The protein operates within lipid metabolism; fatty acid biosynthesis. Involved in the type II fatty acid elongation cycle. Catalyzes the elongation of a wide range of acyl-ACP by the addition of two carbons from malonyl-ACP to an acyl acceptor. Can efficiently catalyze the conversion of palmitoleoyl-ACP (cis-hexadec-9-enoyl-ACP) to cis-vaccenoyl-ACP (cis-octadec-11-enoyl-ACP), an essential step in the thermal regulation of fatty acid composition. This is 3-oxoacyl-[acyl-carrier-protein] synthase 2 (fabF) from Synechocystis sp. (strain ATCC 27184 / PCC 6803 / Kazusa).